We begin with the raw amino-acid sequence, 230 residues long: Uracil-DNA glycosylase (230 aa).

D65 serves as the catalytic Proton acceptor.

The protein belongs to the uracil-DNA glycosylase (UDG) superfamily. UNG family.

The protein resides in the cytoplasm. It carries out the reaction Hydrolyzes single-stranded DNA or mismatched double-stranded DNA and polynucleotides, releasing free uracil.. Its function is as follows. Excises uracil residues from the DNA which can arise as a result of misincorporation of dUMP residues by DNA polymerase or due to deamination of cytosine. The chain is Uracil-DNA glycosylase from Pediococcus pentosaceus (strain ATCC 25745 / CCUG 21536 / LMG 10740 / 183-1w).